The sequence spans 481 residues: Docking protein 1 (481 aa).

Residue Met1 is modified to N-acetylmethionine. Positions 4 to 119 constitute a PH domain; it reads AVMEGPLFLQ…WVQTLCRNAF (116 aa). Position 48 is a phosphoserine (Ser48). In terms of domain architecture, IRS-type PTB spans 151–259; the sequence is EGSQFWVTVQ…HRQKAQGKAG (109 aa). 2 positions are modified to phosphoserine: Ser269 and Ser291. The interval 270-293 is disordered; sequence HEGEVAEGKLPSPPGPQELLDSPP. A Phosphotyrosine modification is found at Tyr296. Residues 307-329 form a disordered region; sequence PCPSQDSLYSDPLDSTSAQAGEG. Over residues 310–325 the composition is skewed to polar residues; the sequence is SQDSLYSDPLDSTSAQ. Phosphotyrosine is present on residues Tyr337 and Tyr341. Tyr362 carries the phosphotyrosine; by INSR modification. Residue Tyr377 is modified to Phosphotyrosine. Position 398 is a phosphotyrosine; by INSR (Tyr398). The segment at 404–481 is disordered; it reads PATDDYAVPP…KTGVKSEGST (78 aa). The residue at position 409 (Tyr409) is a Phosphotyrosine. At Ser416 the chain carries Phosphoserine. Polar residues predominate over residues 436 to 458; sequence ATGSGIKSHNSALYSQVQKSGAS. Phosphotyrosine is present on Tyr449. Phosphoserine is present on Ser460.

Belongs to the DOK family. Type A subfamily. As to quaternary structure, interacts with ABL1. Interacts with RasGAP and INPP5D/SHIP1. Interacts directly with phosphorylated ITGB3. Interacts with SRMS (via the SH2 and SH3 domains). Post-translationally, constitutively tyrosine-phosphorylated. Phosphorylated by TEC. Phosphorylated by LYN. Phosphorylated on tyrosine residues by the insulin receptor kinase. Results in the negative regulation of the insulin signaling pathway. Phosphorylated on tyrosine residues by SRMS. Expressed in pancreas, heart, leukocyte and spleen. Expressed in both resting and activated peripheral blood T-cells. Expressed in breast cancer.

It localises to the cytoplasm. It is found in the nucleus. The protein localises to the perinuclear region. Its function is as follows. DOK proteins are enzymatically inert adaptor or scaffolding proteins. They provide a docking platform for the assembly of multimolecular signaling complexes. DOK1 appears to be a negative regulator of the insulin signaling pathway. Modulates integrin activation by competing with talin for the same binding site on ITGB3. The sequence is that of Docking protein 1 (DOK1) from Homo sapiens (Human).